Consider the following 109-residue polypeptide: Cyclic di-AMP receptor A (109 aa).

3',3'-c-di-AMP is bound by residues T21, F25, T28, G35, F36, L37, N41, G47, E92, and G94.

Homotrimer.

It is found in the cytoplasm. Functionally, binds cyclic di-AMP (c-di-AMP) and is probably involved in c-di-AMP-mediated signaling pathways. In vitro, can also bind cyclic GMP-AMP (3'3'-cGAMP), with lower affinity, but not c-di-GMP or 2'3'-cGAMP. This Bacillus subtilis (strain 168) protein is Cyclic di-AMP receptor A.